The following is a 466-amino-acid chain: Cysteine--tRNA ligase (466 aa).

Residue C29 coordinates Zn(2+). Positions 31–41 (PTVYNYIHIGN) match the 'HIGH' region motif. 3 residues coordinate Zn(2+): C209, H234, and E238. The 'KMSKS' region motif lies at 266–270 (KMSKS). An ATP-binding site is contributed by K269. The residue at position 270 (S270) is a Phosphoserine.

It belongs to the class-I aminoacyl-tRNA synthetase family. Monomer. It depends on Zn(2+) as a cofactor.

It is found in the cytoplasm. The enzyme catalyses tRNA(Cys) + L-cysteine + ATP = L-cysteinyl-tRNA(Cys) + AMP + diphosphate. In Halalkalibacterium halodurans (strain ATCC BAA-125 / DSM 18197 / FERM 7344 / JCM 9153 / C-125) (Bacillus halodurans), this protein is Cysteine--tRNA ligase (cysS).